Here is a 379-residue protein sequence, read N- to C-terminus: Queuine tRNA-ribosyltransferase (379 aa).

Asp-95 (proton acceptor) is an active-site residue. Substrate is bound by residues 95–99, Asp-149, Gln-197, and Gly-224; that span reads DSGGF. The interval 255–261 is RNA binding; the sequence is GVGMPAE. Asp-274 (nucleophile) is an active-site residue. Zn(2+) contacts are provided by Cys-312, Cys-314, Cys-317, and His-343.

This sequence belongs to the queuine tRNA-ribosyltransferase family. As to quaternary structure, homodimer. Within each dimer, one monomer is responsible for RNA recognition and catalysis, while the other monomer binds to the replacement base PreQ1. Zn(2+) is required as a cofactor.

It carries out the reaction 7-aminomethyl-7-carbaguanine + guanosine(34) in tRNA = 7-aminomethyl-7-carbaguanosine(34) in tRNA + guanine. Its pathway is tRNA modification; tRNA-queuosine biosynthesis. In terms of biological role, catalyzes the base-exchange of a guanine (G) residue with the queuine precursor 7-aminomethyl-7-deazaguanine (PreQ1) at position 34 (anticodon wobble position) in tRNAs with GU(N) anticodons (tRNA-Asp, -Asn, -His and -Tyr). Catalysis occurs through a double-displacement mechanism. The nucleophile active site attacks the C1' of nucleotide 34 to detach the guanine base from the RNA, forming a covalent enzyme-RNA intermediate. The proton acceptor active site deprotonates the incoming PreQ1, allowing a nucleophilic attack on the C1' of the ribose to form the product. After dissociation, two additional enzymatic reactions on the tRNA convert PreQ1 to queuine (Q), resulting in the hypermodified nucleoside queuosine (7-(((4,5-cis-dihydroxy-2-cyclopenten-1-yl)amino)methyl)-7-deazaguanosine). This is Queuine tRNA-ribosyltransferase from Solibacter usitatus (strain Ellin6076).